The chain runs to 357 residues: tRNA-specific 2-thiouridylase MnmA (357 aa).

Residues 7-14 (AMSGGVDS) and Met33 each bind ATP. The active-site Nucleophile is Cys101. A disulfide bridge connects residues Cys101 and Cys198. Gly125 contacts ATP. Residues 148-150 (KDQ) are interaction with tRNA. Cys198 serves as the catalytic Cysteine persulfide intermediate.

Belongs to the MnmA/TRMU family.

The protein resides in the cytoplasm. It catalyses the reaction S-sulfanyl-L-cysteinyl-[protein] + uridine(34) in tRNA + AH2 + ATP = 2-thiouridine(34) in tRNA + L-cysteinyl-[protein] + A + AMP + diphosphate + H(+). In terms of biological role, catalyzes the 2-thiolation of uridine at the wobble position (U34) of tRNA, leading to the formation of s(2)U34. The polypeptide is tRNA-specific 2-thiouridylase MnmA (Herpetosiphon aurantiacus (strain ATCC 23779 / DSM 785 / 114-95)).